An 835-amino-acid chain; its full sequence is Cap-specific mRNA (nucleoside-2'-O-)-methyltransferase 1 (835 aa).

The disordered stretch occupies residues 1–66 (MKRRNDSECT…TEGKQRSSDS (66 aa)). The short motif at 2–19 (KRRNDSECTAPLKKQKKR) is the Bipartite nuclear localization signal element. Phosphoserine occurs at positions 28, 31, 53, 66, and 91. The span at 57–66 (TEGKQRSSDS) shows a compositional bias: basic and acidic residues. A G-patch domain is found at 87-133 (YNSVSQKLMAKMGFKEGEGLGKYSQGRKDIVEASNQKGRRGLGLTLQ). Residue K108 is modified to N6-acetyllysine. Substrate contacts are provided by residues 203-207 (KSVFD) and R218. The region spanning 231–450 (FFLNRAAMKM…ERYVVCKGLK (220 aa)) is the RrmJ-type SAM-dependent 2'-O-MTase domain. N234 contributes to the S-adenosyl-L-methionine binding site. K239 is an active-site residue. S-adenosyl-L-methionine-binding positions include 277–283 (CAGPGGF) and 335–336 (DI). The active site involves D364. Residue 374–376 (NLQ) participates in substrate binding. Residue K404 is the Proton acceptor of the active site. N439 is a binding site for substrate. The segment at 727–835 (SSGTPKLSYT…VLSFIQTHSA (109 aa)) is interaction with POLR2A. The region spanning 752-786 (RTVNEPWTMGFSKSFKRKFFYNKKTKNSTFDLPAD) is the WW domain.

In terms of assembly, interacts with POLR2A (via C-terminus).

The protein resides in the nucleus. The enzyme catalyses a 5'-end (N(7)-methyl 5'-triphosphoguanosine)-ribonucleoside in mRNA + S-adenosyl-L-methionine = a 5'-end (N(7)-methyl 5'-triphosphoguanosine)-(2'-O-methyl-ribonucleoside) in mRNA + S-adenosyl-L-homocysteine + H(+). Its function is as follows. S-adenosyl-L-methionine-dependent methyltransferase that mediates mRNA cap1 2'-O-ribose methylation to the 5'-cap structure of mRNAs. Methylates the ribose of the first nucleotide of a m(7)GpppG-capped mRNA and small nuclear RNA (snRNA) to produce m(7)GpppRm (cap1). Displays a preference for cap0 transcripts. Cap1 modification is linked to higher levels of translation. May be involved in the interferon response pathway. This chain is Cap-specific mRNA (nucleoside-2'-O-)-methyltransferase 1 (CMTR1), found in Bos taurus (Bovine).